The sequence spans 316 residues: Ribosomal RNA large subunit methyltransferase F (316 aa).

The protein belongs to the methyltransferase superfamily. METTL16/RlmF family.

The protein resides in the cytoplasm. The enzyme catalyses adenosine(1618) in 23S rRNA + S-adenosyl-L-methionine = N(6)-methyladenosine(1618) in 23S rRNA + S-adenosyl-L-homocysteine + H(+). Its function is as follows. Specifically methylates the adenine in position 1618 of 23S rRNA. This Pseudomonas putida (strain W619) protein is Ribosomal RNA large subunit methyltransferase F.